A 58-amino-acid polypeptide reads, in one-letter code: uncharacterized protein (58 aa).

2 disordered regions span residues 1-20 (MKKN…MNKK) and 38-58 (IIET…KKQQ).

This is an uncharacterized protein from Bacillus subtilis (strain 168).